The chain runs to 256 residues: Thiazole synthase (256 aa).

Residue Lys96 is the Schiff-base intermediate with DXP of the active site. 1-deoxy-D-xylulose 5-phosphate contacts are provided by residues Gly157, 183-184, and 205-206; these read AG and NT.

Belongs to the ThiG family. In terms of assembly, homotetramer. Forms heterodimers with either ThiH or ThiS.

It localises to the cytoplasm. The enzyme catalyses [ThiS sulfur-carrier protein]-C-terminal-Gly-aminoethanethioate + 2-iminoacetate + 1-deoxy-D-xylulose 5-phosphate = [ThiS sulfur-carrier protein]-C-terminal Gly-Gly + 2-[(2R,5Z)-2-carboxy-4-methylthiazol-5(2H)-ylidene]ethyl phosphate + 2 H2O + H(+). It participates in cofactor biosynthesis; thiamine diphosphate biosynthesis. Functionally, catalyzes the rearrangement of 1-deoxy-D-xylulose 5-phosphate (DXP) to produce the thiazole phosphate moiety of thiamine. Sulfur is provided by the thiocarboxylate moiety of the carrier protein ThiS. In vitro, sulfur can be provided by H(2)S. This is Thiazole synthase from Bacillus cereus (strain ATCC 10987 / NRS 248).